The following is a 263-amino-acid chain: Cysteine-rich repeat secretory protein 55 (263 aa).

A signal peptide spans methionine 1–alanine 20. Gnk2-homologous domains are found at residues aspartate 22–phenylalanine 126 and threonine 132–phenylalanine 240.

Belongs to the cysteine-rich repeat secretory protein family.

It is found in the secreted. In Arabidopsis thaliana (Mouse-ear cress), this protein is Cysteine-rich repeat secretory protein 55 (CRRSP55).